A 459-amino-acid chain; its full sequence is Zinc finger protein ZPR1 (459 aa).

Residues 1–29 (MSAGGAVEPGLPAAAAAPSAAPARDPGPG) are compositionally biased toward low complexity. The tract at residues 1 to 43 (MSAGGAVEPGLPAAAAAPSAAPARDPGPGHLFRPISAEDEEQQ) is disordered. 2 C4-type zinc fingers span residues 51–83 (CMNC…CEHC) and 259–291 (CPEC…CENC). Residues 438–459 (NEELGLNDMKTEGYETGLPAQR) form a disordered region.

It belongs to the ZPR1 family. As to quaternary structure, component of an import snRNP complex composed of KPNB1, SNUPN, SMN1 and ZNF259. Interacts (via C-terminal region) with SMN1 (via C-terminal region); the interaction occurs after treatment with serum. Interacts with elongation factor 1-alpha EEF1A1; the interaction occurs in a epidermal growth factor (EGF)-dependent manner. Interacts (via zinc fingers) with EGFR (via C-terminal cytoplasmic kinase domain); the interaction is negatively regulated in response to epidermal growth factor (EGF) stimulation and EGFR kinase activity. May also bind to the PDGFR receptor.

The protein localises to the nucleus. It localises to the cytoplasm. It is found in the nucleolus. Its subcellular location is the perinuclear region. The protein resides in the gem. The protein localises to the cajal body. It localises to the cell projection. It is found in the axon. Its subcellular location is the growth cone. Its function is as follows. Acts as a signaling molecule that communicates proliferative growth signals from the cytoplasm to the nucleus. Plays a role for the localization and accumulation of the survival motor neuron protein SMN1 in sub-nuclear bodies, including gems and Cajal bodies. Induces neuron differentiation and stimulates axonal growth and formation of growth cone in spinal cord motor neurons. Plays a role in the splicing of cellular pre-mRNAs. May be involved in H(2)O(2)-induced neuronal cell death. This chain is Zinc finger protein ZPR1 (ZNF259), found in Bos taurus (Bovine).